Consider the following 366-residue polypeptide: Carbamoyl phosphate synthase small chain (366 aa).

Positions 1–168 are CPSase; it reads MYGILVLEDG…KETVVYSADD (168 aa). Residues Ser45, Gly220, and Gly222 each coordinate L-glutamine. The Glutamine amidotransferase type-1 domain occupies 172–363; sequence KCVLIDCGVK…VELGIKFKAE (192 aa). The active-site Nucleophile is the Cys247. Residues Leu248, Gln251, Asn289, Gly291, and Phe292 each contribute to the L-glutamine site. Active-site residues include His336 and Glu338.

The protein belongs to the CarA family. In terms of assembly, composed of two chains; the small (or glutamine) chain promotes the hydrolysis of glutamine to ammonia, which is used by the large (or ammonia) chain to synthesize carbamoyl phosphate. Tetramer of heterodimers (alpha,beta)4.

It carries out the reaction hydrogencarbonate + L-glutamine + 2 ATP + H2O = carbamoyl phosphate + L-glutamate + 2 ADP + phosphate + 2 H(+). The catalysed reaction is L-glutamine + H2O = L-glutamate + NH4(+). Its pathway is amino-acid biosynthesis; L-arginine biosynthesis; carbamoyl phosphate from bicarbonate: step 1/1. It participates in pyrimidine metabolism; UMP biosynthesis via de novo pathway; (S)-dihydroorotate from bicarbonate: step 1/3. In terms of biological role, small subunit of the glutamine-dependent carbamoyl phosphate synthetase (CPSase). CPSase catalyzes the formation of carbamoyl phosphate from the ammonia moiety of glutamine, carbonate, and phosphate donated by ATP, constituting the first step of 2 biosynthetic pathways, one leading to arginine and/or urea and the other to pyrimidine nucleotides. The small subunit (glutamine amidotransferase) binds and cleaves glutamine to supply the large subunit with the substrate ammonia. This chain is Carbamoyl phosphate synthase small chain, found in Methanococcus maripaludis (strain C6 / ATCC BAA-1332).